Reading from the N-terminus, the 188-residue chain is uncharacterized protein (188 aa).

This is an uncharacterized protein from Haemophilus influenzae (strain ATCC 51907 / DSM 11121 / KW20 / Rd).